Reading from the N-terminus, the 475-residue chain is Glutamate--tRNA ligase (475 aa).

Residues 9–19 (PSPTGYLHVGG) carry the 'HIGH' region motif. The short motif at 240-244 (KLSKR) is the 'KMSKS' region element. Lys-243 lines the ATP pocket.

Belongs to the class-I aminoacyl-tRNA synthetase family. Glutamate--tRNA ligase type 1 subfamily. As to quaternary structure, monomer.

Its subcellular location is the cytoplasm. The enzyme catalyses tRNA(Glu) + L-glutamate + ATP = L-glutamyl-tRNA(Glu) + AMP + diphosphate. Catalyzes the attachment of glutamate to tRNA(Glu) in a two-step reaction: glutamate is first activated by ATP to form Glu-AMP and then transferred to the acceptor end of tRNA(Glu). The polypeptide is Glutamate--tRNA ligase (Vibrio campbellii (strain ATCC BAA-1116)).